The sequence spans 447 residues: Probable cytosol aminopeptidase (447 aa).

Positions 218 and 223 each coordinate Mn(2+). Lys230 is an active-site residue. 3 residues coordinate Mn(2+): Asp241, Asp300, and Glu302. The active site involves Arg304.

Belongs to the peptidase M17 family. Mn(2+) serves as cofactor.

It localises to the cytoplasm. It carries out the reaction Release of an N-terminal amino acid, Xaa-|-Yaa-, in which Xaa is preferably Leu, but may be other amino acids including Pro although not Arg or Lys, and Yaa may be Pro. Amino acid amides and methyl esters are also readily hydrolyzed, but rates on arylamides are exceedingly low.. The catalysed reaction is Release of an N-terminal amino acid, preferentially leucine, but not glutamic or aspartic acids.. Presumably involved in the processing and regular turnover of intracellular proteins. Catalyzes the removal of unsubstituted N-terminal amino acids from various peptides. The chain is Probable cytosol aminopeptidase (pepA) from Mycoplasma genitalium (strain ATCC 33530 / DSM 19775 / NCTC 10195 / G37) (Mycoplasmoides genitalium).